A 442-amino-acid polypeptide reads, in one-letter code: Hydroxycinnamoyltransferase 1 (442 aa).

Residues His-159 and Asp-389 each act as proton acceptor in the active site.

This sequence belongs to the plant acyltransferase family. As to expression, expressed in roots, leaves, stems and seeds.

Functionally, hydroxycinnamoyl transferase that catalyzes the transfer of an acyl from p-coumaryol-CoA to various acyl acceptors. Can use feruloyl-CoA and caffeoyl-CoA as acyl donors. This chain is Hydroxycinnamoyltransferase 1, found in Oryza sativa subsp. japonica (Rice).